Consider the following 554-residue polypeptide: Calcium/calmodulin-dependent protein kinase type II delta 2 chain (554 aa).

In terms of domain architecture, Protein kinase spans 13-271 (YQLFEELGKG…AAEAPKHPWI (259 aa)). ATP is bound by residues 19 to 27 (LGKGAFSVV) and Lys42. The active-site Proton acceptor is the Asp135. A Phosphothreonine modification is found at Thr286. Ser314 and Ser318 each carry phosphoserine. Disordered stretches follow at residues 324–375 (PDGV…TIED) and 392–413 (WQPS…SSVQ). The span at 330–340 (NNKTNLASSPK) shows a compositional bias: polar residues. Phosphothreonine is present on Thr372.

This sequence belongs to the protein kinase superfamily. CAMK Ser/Thr protein kinase family. CaMK subfamily. As to quaternary structure, CAMK2 is composed of four different chains: alpha, beta, gamma, and delta. The different isoforms assemble into homo- or heteromultimeric holoenzymes composed of 8 to 12 subunits. As to expression, first detected at 18 hpf. At 24 hpf, expressed in discrete anterior locations and along either side of the midline. At 48 hpf, expression is predominantly in the forebrain, and then accumulates in the forebrain, hindbrain, and retinal epithelium at 72 hpf.

It carries out the reaction L-seryl-[protein] + ATP = O-phospho-L-seryl-[protein] + ADP + H(+). The enzyme catalyses L-threonyl-[protein] + ATP = O-phospho-L-threonyl-[protein] + ADP + H(+). With respect to regulation, autophosphorylation of CAMK2 plays an important role in the regulation of the kinase activity. In terms of biological role, caM-kinase II (CAMK2) is a prominent kinase in the central nervous system. This is Calcium/calmodulin-dependent protein kinase type II delta 2 chain (camk2d2) from Danio rerio (Zebrafish).